Reading from the N-terminus, the 114-residue chain is Hemerythrin subunit 1 (114 aa).

Fe cation contacts are provided by His-26, His-55, Glu-59, His-74, His-78, His-102, and Asp-107.

This sequence belongs to the hemerythrin family.

In terms of biological role, hemerythrin is a respiratory protein in blood cells of certain marine worms. The oxygen-binding site in each chain contains two iron atoms. The chain is Hemerythrin subunit 1 from Golfingia vulgaris (Marine worm).